A 509-amino-acid polypeptide reads, in one-letter code: Activin receptor type-1 (509 aa).

Residues 1 to 20 (MVDGVMILPVLVMIAFPFPS) form the signal peptide. Topologically, residues 21–123 (MEDEKPKVNP…FPGTQNFHLE (103 aa)) are extracellular. An N-linked (GlcNAc...) asparagine glycan is attached at N102. A helical transmembrane segment spans residues 124 to 146 (VGLIILSVVFAVCLLACLLGVAL). Residues 147-509 (RKFKRRNQER…NSLDKLKTDC (363 aa)) are Cytoplasmic-facing. Positions 178–207 (STLADLLDHSCTSGSGSGLPFLVQRTVARQ) constitute a GS domain. One can recognise a Protein kinase domain in the interval 208–502 (ITLLECVGKG…KTLTKIDNSL (295 aa)). Residues 214–222 (VGKGRYGEV) and K235 each bind ATP. The active-site Proton acceptor is D336. A Phosphoserine modification is found at S501.

Belongs to the protein kinase superfamily. TKL Ser/Thr protein kinase family. TGFB receptor subfamily. In terms of assembly, interacts with FKBP1A. Interacts with FCHO1. Interacts with CLU. Interacts with type II receptors AMHR2 and ACVR2A. Interacts with BMP7. Interacts with BMP9. Interacts with BMP6 (when glycosylated); the interaction may induce HAMP expression. Interacts with TSC22D1/TSC-22. Mg(2+) serves as cofactor. It depends on Mn(2+) as a cofactor.

The protein localises to the membrane. The catalysed reaction is L-threonyl-[receptor-protein] + ATP = O-phospho-L-threonyl-[receptor-protein] + ADP + H(+). It carries out the reaction L-seryl-[receptor-protein] + ATP = O-phospho-L-seryl-[receptor-protein] + ADP + H(+). In terms of biological role, bone morphogenetic protein (BMP) type I receptor that is involved in a wide variety of biological processes, including bone, heart, cartilage, nervous, and reproductive system development and regulation. As a type I receptor, forms heterotetrameric receptor complexes with the type II receptors AMHR2, ACVR2A ors ACVR2B. Upon binding of ligands such as BMP7 or BMP9 to the heteromeric complexes, type II receptors transphosphorylate ACVR1 intracellular domain. In turn, ACVR1 kinase domain is activated and subsequently phosphorylates SMAD1/5/8 proteins that transduce the signal. In addition to its role in mediating BMP pathway-specific signaling, suppresses TGFbeta/activin pathway signaling by interfering with the binding of activin to its type II receptor. Besides canonical SMAD signaling, can activate non-canonical signaling pathways. May promote the expression of HAMP, potentially via its interaction with BMP6. This Bos taurus (Bovine) protein is Activin receptor type-1 (ACVR1).